A 424-amino-acid polypeptide reads, in one-letter code: GTPase Obg (424 aa).

Residues 1 to 158 (MFIDTAKIFV…RWIKLELKLL (158 aa)) form the Obg domain. The region spanning 159-331 (ADVGLIGFPN…LMKEAARLLS (173 aa)) is the OBG-type G domain. GTP contacts are provided by residues 165 to 172 (GFPNVGKS), 190 to 194 (FTTLK), 212 to 215 (DIPG), 282 to 285 (NKSD), and 312 to 314 (SAA). Mg(2+) is bound by residues S172 and T192. One can recognise an OCT domain in the interval 345-424 (RFIEEEKRFT…LNDFEFDFLL (80 aa)).

The protein belongs to the TRAFAC class OBG-HflX-like GTPase superfamily. OBG GTPase family. Monomer. It depends on Mg(2+) as a cofactor.

The protein localises to the cytoplasm. Functionally, an essential GTPase which binds GTP, GDP and possibly (p)ppGpp with moderate affinity, with high nucleotide exchange rates and a fairly low GTP hydrolysis rate. Plays a role in control of the cell cycle, stress response, ribosome biogenesis and in those bacteria that undergo differentiation, in morphogenesis control. This is GTPase Obg from Clostridium botulinum (strain Okra / Type B1).